The sequence spans 305 residues: Ribonucleoside-diphosphate reductase small subunit (305 aa).

Fe cation contacts are provided by E64, E94, and H97. Residue Y101 is part of the active site. A helical transmembrane segment spans residues I150 to L170. Fe cation contacts are provided by E157, E191, and H194.

It belongs to the ribonucleoside diphosphate reductase small chain family. In terms of assembly, heterotetramer composed of a homodimer of the large subunit (R1) and a homodimer of the small subunit (R2). Larger multisubunit protein complex are also active, composed of (R1)n(R2)n. The cofactor is Fe cation.

The protein resides in the host membrane. It catalyses the reaction a 2'-deoxyribonucleoside 5'-diphosphate + [thioredoxin]-disulfide + H2O = a ribonucleoside 5'-diphosphate + [thioredoxin]-dithiol. Ribonucleoside-diphosphate reductase holoenzyme provides the precursors necessary for viral DNA synthesis. Allows virus growth in non-dividing cells, as well as reactivation from latency in infected hosts. Catalyzes the biosynthesis of deoxyribonucleotides from the corresponding ribonucleotides. The chain is Ribonucleoside-diphosphate reductase small subunit from Homo sapiens (Human).